The primary structure comprises 295 residues: MNTNHIRQVVIVGGTHGNERIGLYLVKKFNQDSSLLFRPNLTTNCLIGNPQACKENQRYIETDLNRCFIKADLDNHLLGRHEEKQAKVLHEQLGPKGNSENFLLDLHSTTANMGLTLILVNDHPFNLHLAAYLTHHNPQVRVYRWTQENQENAFVSSLCQLGFAIEVGPIPQGILLASLFKETETLIHQTLDYLEQVNRGASPPLPKTLTLFQHLEVVDYPKTSNGELAGMIHPQLQGRDYQPLNPGDPIFLTFEDQTLFYEGCSTVWPIFINEAAYYEKGIAMCLTHKQDISLK.

His-16 and Glu-19 together coordinate Zn(2+). Residues Arg-58 and 65 to 66 (NR) each bind substrate. His-107 is a Zn(2+) binding site. Substrate-binding residues include Glu-166 and Tyr-277.

Belongs to the AspA/AstE family. Aspartoacylase subfamily. Requires Zn(2+) as cofactor.

It catalyses the reaction an N-acyl-L-aspartate + H2O = a carboxylate + L-aspartate. The chain is Probable aspartoacylase from Acaryochloris marina (strain MBIC 11017).